A 368-amino-acid polypeptide reads, in one-letter code: Carbamoyl phosphate synthase small chain (368 aa).

Positions 1–178 (MKAVLGLEDG…GAECAWKGSG (178 aa)) are CPSase. Positions 45, 230, and 232 each coordinate L-glutamine. The region spanning 182–368 (HAVVVDLGIK…KVVKVLGGDL (187 aa)) is the Glutamine amidotransferase type-1 domain. Cys-257 acts as the Nucleophile in catalysis. Residues Phe-258, Gln-261, Asn-299, Gly-301, and Tyr-302 each contribute to the L-glutamine site. Catalysis depends on residues His-342 and Glu-344.

It belongs to the CarA family. As to quaternary structure, composed of two chains; the small (or glutamine) chain promotes the hydrolysis of glutamine to ammonia, which is used by the large (or ammonia) chain to synthesize carbamoyl phosphate. Tetramer of heterodimers (alpha,beta)4.

The enzyme catalyses hydrogencarbonate + L-glutamine + 2 ATP + H2O = carbamoyl phosphate + L-glutamate + 2 ADP + phosphate + 2 H(+). The catalysed reaction is L-glutamine + H2O = L-glutamate + NH4(+). It functions in the pathway amino-acid biosynthesis; L-arginine biosynthesis; carbamoyl phosphate from bicarbonate: step 1/1. Its pathway is pyrimidine metabolism; UMP biosynthesis via de novo pathway; (S)-dihydroorotate from bicarbonate: step 1/3. Functionally, small subunit of the glutamine-dependent carbamoyl phosphate synthetase (CPSase). CPSase catalyzes the formation of carbamoyl phosphate from the ammonia moiety of glutamine, carbonate, and phosphate donated by ATP, constituting the first step of 2 biosynthetic pathways, one leading to arginine and/or urea and the other to pyrimidine nucleotides. The small subunit (glutamine amidotransferase) binds and cleaves glutamine to supply the large subunit with the substrate ammonia. The sequence is that of Carbamoyl phosphate synthase small chain from Methanosarcina acetivorans (strain ATCC 35395 / DSM 2834 / JCM 12185 / C2A).